The sequence spans 349 residues: Ferredoxin--NADP reductase 1 (349 aa).

7 residues coordinate FAD: E36, K44, Y48, V88, L123, D290, and S331.

Belongs to the ferredoxin--NADP reductase type 2 family. Homodimer. FAD serves as cofactor.

The catalysed reaction is 2 reduced [2Fe-2S]-[ferredoxin] + NADP(+) + H(+) = 2 oxidized [2Fe-2S]-[ferredoxin] + NADPH. The sequence is that of Ferredoxin--NADP reductase 1 from Bacillus cytotoxicus (strain DSM 22905 / CIP 110041 / 391-98 / NVH 391-98).